The primary structure comprises 286 residues: Ribosome-inactivating protein momordin II (286 aa).

Positions 1 to 23 (MVKCLLLSFLIIAIFIGVPTAKG) are cleaved as a signal peptide. E181 is a catalytic residue.

It belongs to the ribosome-inactivating protein family. Type 1 RIP subfamily.

The catalysed reaction is Endohydrolysis of the N-glycosidic bond at one specific adenosine on the 28S rRNA.. In Momordica balsamina (Bitter gourd), this protein is Ribosome-inactivating protein momordin II.